The sequence spans 145 residues: Maximins 5/H4 type 1 (145 aa).

The N-terminal stretch at 1 to 18 is a signal peptide; the sequence is MNFKYIVAVSFLIASAYA. Propeptides lie at residues 19 to 43 and 74 to 124; these read RSVQ…REIR and TAEE…KEKR. The residue at position 144 (L144) is a Leucine amide.

It belongs to the bombinin family. As to expression, expressed by the skin glands.

The protein localises to the secreted. Its function is as follows. Maximin-5 shows antibacterial activity against both Gram-positive and Gram-negative bacteria. The only exception is the resistance of E.coli. Also shows antimicrobial activity against fungi C.albicans, A.flavus and P.uticale. It has little hemolytic activity. It does not possess a significant cytotoxicity against tumor cell lines. It does not possess a significant anti-HIV activity. Maximin-H4 shows antibacterial activity against both Gram-positive and Gram-negative bacteria. It also shows antimicrobial activity against the fungus C.albicans. Shows strong hemolytic activity. This Bombina maxima (Giant fire-bellied toad) protein is Maximins 5/H4 type 1.